The sequence spans 242 residues: MADKETLLKLREDFKMQNKSVFILGASGETGKVLLKEILGQNLFSKVTLIGRRKLTFEEEAYNNVNQEVVDFEKLDEYAPAFQGHDVGFCCLGTTRRKAGADGFVRVDRDYVLKSAELAKAGGCKHFNLLSSRGADKSSSFLYLQVKGEVEAKVEELKFDRLSVFRPGVLLCDRQESRPGEWLARKFFGSLPDSWASGYAVPVVTVVRAMLNNLVSPGSGQMELLENKAILHLGKDSDGPKL.

Residue A2 is modified to N-acetylalanine. Residues 2–25 are required for interaction with elongation factor EEF1A1; that stretch reads ADKETLLKLREDFKMQNKSVFILG. NADPH-binding residues include S27, G28, E29, T30, R52, R53, L92, G93, Y143, K147, L170, and R178. Residue Y143 is the Proton acceptor of the active site. The active site involves K147.

As to quaternary structure, monomer. Forms homodimers during oxidative stress. Interacts (via N-terminus) with elongation factor EEF1A1 (via middle-region); the interaction is direct and competes with EEF1A1 binding to guanyl-nucleotide exchange factor EEF1B2, thereby inhibiting GDP for GTP exchange and reactivation of EEF1A1. Interacts with nuclear transport receptors XPO4, IPO5/RANBP5, IPO7, IPO9 and KPNB1 as well as GCN1L1/GCN1 and LRPPRC probably through their HEAT repeats. Binds NCOA5/CIA.

Represses translation by preventing reactivation of elongation factor eEF1A. May also inhibit nuclear import by competing with nuclear import substrates for binding to a subset of nuclear transport receptors. Has additionally been proposed to act as a redox sensor involved in cellular oxidative stress surveillance. May bind NADPH. This is Protein HTATIP2 from Rattus norvegicus (Rat).